The sequence spans 522 residues: Sugar transport protein 1 (522 aa).

The Cytoplasmic portion of the chain corresponds to Met1–Phe22. Residues Val23–Ile43 traverse the membrane as a helical segment. At Ser44 to Ser79 the chain is on the extracellular side. Residues Pro80–Ala100 traverse the membrane as a helical segment. The Cytoplasmic segment spans residues Ser101 to Gly117. A helical transmembrane segment spans residues Ile118–Val138. At Gly139 to Arg140 the chain is on the extracellular side. Residues Ile141–Met161 form a helical membrane-spanning segment. Residues Ala162–Asn171 are Cytoplasmic-facing. The helical transmembrane segment at Ile172 to Phe192 threads the bilayer. At Ala193 to Arg202 the chain is on the extracellular side. Residues Leu203–Pro223 form a helical membrane-spanning segment. Residues Asp224 to Met289 lie on the Cytoplasmic side of the membrane. Ser252 is modified (phosphoserine). A helical transmembrane segment spans residues Ile290–Phe310. At Asn311–Leu321 the chain is on the extracellular side. The chain crosses the membrane as a helical span at residues Met322–Val342. Over Asp343 to Arg348 the chain is Cytoplasmic. A helical transmembrane segment spans residues Phe349–Ile369. The Extracellular segment spans residues Gly370–Lys384. Residues Trp385–Trp405 traverse the membrane as a helical segment. Residues Gly406–Ser427 lie on the Cytoplasmic side of the membrane. A helical membrane pass occupies residues Ile428–Leu448. Topologically, residues Cys449–Lys452 are extracellular. The chain crosses the membrane as a helical span at residues Phe453–Phe473. The Cytoplasmic segment spans residues Leu474 to Val522.

The protein belongs to the major facilitator superfamily. Sugar transporter (TC 2.A.1.1) family. Mostly expressed in young leaves, especially in guard cells (at protein level). Also present in roots.

Its subcellular location is the cell membrane. Major hexose transporter. Mediates an active uptake of hexoses, by sugar/hydrogen symport. Can transport glucose, 3-O-methylglucose, fructose, xylose, mannose, galactose, fucose, 2-deoxyglucose and arabinose. Confers sensitivity to galactose in seedlings. The sequence is that of Sugar transport protein 1 (STP1) from Arabidopsis thaliana (Mouse-ear cress).